A 335-amino-acid polypeptide reads, in one-letter code: MKTYYEKDANVELLKGKTVAVIGYGSQGHAQAQNLRDSGVEVVVGVRPGKSFEVAKTDGFEVMSVSEAVRTAQVVQMLLPDEQQAHVYKAGVEENLREGQMLLFSHGFNIHFGQINPPSYVDVAMVAPKSPGHLVRRVFQEGNGVPALVAVHQDATGTALHVALAYAKGVGCTRAGVIETTFQEETETDLFGEQTVLCGGVTALVKAGFETLTEGGYRPEIAYFECLHELKLIVDLMYEGGLTNMRHSISDTAEFGDYVTGSRIVTDETKKEMKRVLTEIQQGEFAKKWILENQAGRPTYNAMKKAEQNHQLEKVGAELREMMSWIDAPKELVKK.

Positions 1–180 constitute a KARI N-terminal Rossmann domain; the sequence is MKTYYEKDAN…GCTRAGVIET (180 aa). NADP(+) is bound by residues 24–27, Arg-47, Ser-51, and 81–84; these read YGSQ and DEQQ. Residue His-106 is part of the active site. Gly-132 lines the NADP(+) pocket. The KARI C-terminal knotted domain maps to 181-326; sequence TFQEETETDL…AELREMMSWI (146 aa). Mg(2+)-binding residues include Asp-189, Glu-193, Glu-225, and Glu-229. Ser-250 is a substrate binding site.

This sequence belongs to the ketol-acid reductoisomerase family. The cofactor is Mg(2+).

It catalyses the reaction (2R)-2,3-dihydroxy-3-methylbutanoate + NADP(+) = (2S)-2-acetolactate + NADPH + H(+). The catalysed reaction is (2R,3R)-2,3-dihydroxy-3-methylpentanoate + NADP(+) = (S)-2-ethyl-2-hydroxy-3-oxobutanoate + NADPH + H(+). It participates in amino-acid biosynthesis; L-isoleucine biosynthesis; L-isoleucine from 2-oxobutanoate: step 2/4. It functions in the pathway amino-acid biosynthesis; L-valine biosynthesis; L-valine from pyruvate: step 2/4. In terms of biological role, involved in the biosynthesis of branched-chain amino acids (BCAA). Catalyzes an alkyl-migration followed by a ketol-acid reduction of (S)-2-acetolactate (S2AL) to yield (R)-2,3-dihydroxy-isovalerate. In the isomerase reaction, S2AL is rearranged via a Mg-dependent methyl migration to produce 3-hydroxy-3-methyl-2-ketobutyrate (HMKB). In the reductase reaction, this 2-ketoacid undergoes a metal-dependent reduction by NADPH to yield (R)-2,3-dihydroxy-isovalerate. This Bacillus cereus (strain ATCC 10987 / NRS 248) protein is Ketol-acid reductoisomerase (NADP(+)) 2.